The primary structure comprises 318 residues: Formimidoylglutamase (318 aa).

Mn(2+)-binding residues include histidine 130, aspartate 155, histidine 157, aspartate 159, aspartate 246, and aspartate 248.

This sequence belongs to the arginase family. Mn(2+) is required as a cofactor.

The catalysed reaction is N-formimidoyl-L-glutamate + H2O = formamide + L-glutamate. It functions in the pathway amino-acid degradation; L-histidine degradation into L-glutamate; L-glutamate from N-formimidoyl-L-glutamate (hydrolase route): step 1/1. Its function is as follows. Catalyzes the conversion of N-formimidoyl-L-glutamate to L-glutamate and formamide. This chain is Formimidoylglutamase, found in Klebsiella pneumoniae (strain 342).